Reading from the N-terminus, the 927-residue chain is Translation initiation factor IF-2 (927 aa).

The disordered stretch occupies residues 27-337 (LGLPVKSHAS…GAPKPVTERK (311 aa)). The span at 49–69 (SFSSSKTKAPTNSVQTNQGVK) shows a compositional bias: polar residues. Composition is skewed to basic and acidic residues over residues 70 to 86 (TESK…DDKP) and 101 to 138 (FKAE…DRRH). Low complexity predominate over residues 146–159 (GNRNDNRQGQQNNR). Composition is skewed to basic and acidic residues over residues 160 to 171 (NKNDGRYADHKQ), 202 to 226 (YSRH…EQEL), and 234 to 257 (AQEE…KEIV). Low complexity predominate over residues 300–316 (NWNNQNQVRNQRNSNWN). One can recognise a tr-type G domain in the interval 428 to 597 (ERPPVVTIMG…LLVAEMEELK (170 aa)). Residues 437-444 (GHVDHGKT) are G1. 437–444 (GHVDHGKT) contributes to the GTP binding site. Residues 462–466 (GITQH) are G2. The G3 stretch occupies residues 483–486 (DTPG). Residues 483 to 487 (DTPGH) and 537 to 540 (NKID) each bind GTP. The segment at 537–540 (NKID) is G4. The tract at residues 573 to 575 (SAK) is G5.

Belongs to the TRAFAC class translation factor GTPase superfamily. Classic translation factor GTPase family. IF-2 subfamily.

It is found in the cytoplasm. In terms of biological role, one of the essential components for the initiation of protein synthesis. Protects formylmethionyl-tRNA from spontaneous hydrolysis and promotes its binding to the 30S ribosomal subunits. Also involved in the hydrolysis of GTP during the formation of the 70S ribosomal complex. The polypeptide is Translation initiation factor IF-2 (Streptococcus agalactiae serotype V (strain ATCC BAA-611 / 2603 V/R)).